The following is a 457-amino-acid chain: Chromosomal replication initiator protein DnaA (457 aa).

The domain I, interacts with DnaA modulators stretch occupies residues 1-90 (MAVSLWQQCI…RPSAKPQAPA (90 aa)). A disordered region spans residues 79 to 120 (GSRPSAKPQAPAPAAVKAAAPQPKPGNSFVSQPEPAVSNHRS). Over residues 84-99 (AKPQAPAPAAVKAAAP) the composition is skewed to low complexity. A domain II region spans residues 91–120 (PAAVKAAAPQPKPGNSFVSQPEPAVSNHRS). The interval 121–337 (NINPTYQFDN…GALNRVIANA (217 aa)) is domain III, AAA+ region. Positions 165, 167, 168, and 169 each coordinate ATP. Residues 338–457 (NFTGRPITID…YANLIRTLSS (120 aa)) are domain IV, binds dsDNA.

It belongs to the DnaA family. Oligomerizes as a right-handed, spiral filament on DNA at oriC.

The protein localises to the cytoplasm. Functionally, plays an essential role in the initiation and regulation of chromosomal replication. ATP-DnaA binds to the origin of replication (oriC) to initiate formation of the DNA replication initiation complex once per cell cycle. Binds the DnaA box (a 9 base pair repeat at the origin) and separates the double-stranded (ds)DNA. Forms a right-handed helical filament on oriC DNA; dsDNA binds to the exterior of the filament while single-stranded (ss)DNA is stabiized in the filament's interior. The ATP-DnaA-oriC complex binds and stabilizes one strand of the AT-rich DNA unwinding element (DUE), permitting loading of DNA polymerase. After initiation quickly degrades to an ADP-DnaA complex that is not apt for DNA replication. Binds acidic phospholipids. The protein is Chromosomal replication initiator protein DnaA of Shewanella amazonensis (strain ATCC BAA-1098 / SB2B).